Here is a 399-residue protein sequence, read N- to C-terminus: Fe-coproporphyrin III synthase (399 aa).

Positions 36–253 (KDKKPVVVWN…TRKLHEKGFP (218 aa)) constitute a Radical SAM core domain. [4Fe-4S] cluster contacts are provided by cysteine 50, cysteine 54, and cysteine 57.

Belongs to the radical SAM superfamily. [4Fe-4S] cluster is required as a cofactor.

The catalysed reaction is 12,18-didecarboxysiroheme + 2 AH2 + 2 S-adenosyl-L-methionine = Fe-coproporphyrin III + 2 5'-deoxyadenosine + 2 L-methionine + 2 acetate + 2 A + 2 H(+). It functions in the pathway porphyrin-containing compound metabolism; protoheme biosynthesis. Its function is as follows. Involved in siroheme-dependent heme b biosynthesis. Catalyzes the conversion of didecarboxysiroheme into Fe-coproporphyrin III by oxidative loss of two acetic acid side chains. This chain is Fe-coproporphyrin III synthase, found in Methanosarcina barkeri (strain Fusaro / DSM 804).